The chain runs to 83 residues: Mu-theraphotoxin-Hhn2j 3 (83 aa).

The first 21 residues, 1 to 21 (MKALMFLALAGLVLLFVVGYA), serve as a signal peptide directing secretion. A propeptide spanning residues 22-48 (SESEEKEFPIELLSKIFAVDVFKGEER) is cleaved from the precursor. Disulfide bonds link C50–C65, C57–C70, and C64–C77. Position 81 is a leucine amide (L81).

This sequence belongs to the neurotoxin 10 (Hwtx-1) family. 15 (Hntx-3) subfamily. As to quaternary structure, monomer. As to expression, expressed by the venom gland.

The protein localises to the secreted. In terms of biological role, lethal neurotoxin. Selectively blocks tetrodotoxin-sensitive voltage-gated sodium channels (Nav). Does not affect tetrodotoxin-resistant voltage-gated sodium channels or calcium channels. This is Mu-theraphotoxin-Hhn2j 3 from Cyriopagopus hainanus (Chinese bird spider).